The following is a 325-amino-acid chain: Cytochrome c1, heme protein, mitochondrial (325 aa).

Residues 1-84 constitute a mitochondrion transit peptide; that stretch reads MAAAAASLRG…AMALHSAVSA (84 aa). Topologically, residues 85–281 are mitochondrial intermembrane; sequence SDLELHPPSY…TFLRWASEPE (197 aa). Positions 108–209 constitute a Cytochrome c domain; the sequence is TSIRRGFQVY…IVRARHGGED (102 aa). Heme c is bound by residues cysteine 121, cysteine 124, and histidine 125. Phosphoserine is present on serine 182. Residue methionine 244 coordinates heme c. The chain crosses the membrane as a helical span at residues 282–315; it reads HDHRKRMGLKMLMMMALLVPLVYTIKRHKWSVLK. The Mitochondrial matrix portion of the chain corresponds to 316–325; sequence SRKLAYRPPK.

This sequence belongs to the cytochrome c family. In terms of assembly, component of the ubiquinol-cytochrome c oxidoreductase (cytochrome b-c1 complex, complex III, CIII), a multisubunit enzyme composed of 11 subunits. The complex is composed of 3 respiratory subunits cytochrome b, cytochrome c1 and Rieske protein UQCRFS1, 2 core protein subunits UQCRC1/QCR1 and UQCRC2/QCR2, and 6 low-molecular weight protein subunits UQCRH/QCR6, UQCRB/QCR7, UQCRQ/QCR8, UQCR10/QCR9, UQCR11/QCR10 and subunit 9, the cleavage product of Rieske protein UQCRFS1. The complex exists as an obligatory dimer and forms supercomplexes (SCs) in the inner mitochondrial membrane with NADH-ubiquinone oxidoreductase (complex I, CI) and cytochrome c oxidase (complex IV, CIV), resulting in different assemblies (supercomplex SCI(1)III(2)IV(1) and megacomplex MCI(2)III(2)IV(2)). Interacts with FLVCR2; this interaction occurs in the absence of heme and is disrupted upon heme binding. Requires heme c as cofactor.

It localises to the mitochondrion inner membrane. The catalysed reaction is a quinol + 2 Fe(III)-[cytochrome c](out) = a quinone + 2 Fe(II)-[cytochrome c](out) + 2 H(+)(out). Its function is as follows. Component of the ubiquinol-cytochrome c oxidoreductase, a multisubunit transmembrane complex that is part of the mitochondrial electron transport chain which drives oxidative phosphorylation. The respiratory chain contains 3 multisubunit complexes succinate dehydrogenase (complex II, CII), ubiquinol-cytochrome c oxidoreductase (cytochrome b-c1 complex, complex III, CIII) and cytochrome c oxidase (complex IV, CIV), that cooperate to transfer electrons derived from NADH and succinate to molecular oxygen, creating an electrochemical gradient over the inner membrane that drives transmembrane transport and the ATP synthase. The cytochrome b-c1 complex catalyzes electron transfer from ubiquinol to cytochrome c, linking this redox reaction to translocation of protons across the mitochondrial inner membrane, with protons being carried across the membrane as hydrogens on the quinol. In the process called Q cycle, 2 protons are consumed from the matrix, 4 protons are released into the intermembrane space and 2 electrons are passed to cytochrome c. Cytochrome c1 is a catalytic core subunit containing a c-type heme. It transfers electrons from the [2Fe-2S] iron-sulfur cluster of the Rieske protein to cytochrome c. This chain is Cytochrome c1, heme protein, mitochondrial (CYC1), found in Homo sapiens (Human).